The sequence spans 592 residues: MFGRTYYCGDITEKAIGESVTLKGWVQKRRDLGGLIFIDLRDRTGIVQVVFNPDVSKEALAIAEGIRNEYVLDIQGKVVAREEGTVNPNLKTGAIEIHADGVNVLNAAKTPPFAISDQAEEVSEDVRLKHRYLDLRRPAMFQTMQLRHNVTKAVRSFLDENGFLDIETPILTGSTPEGARDYLVPSRVHEGEFYALPQSPQLFKQLLMVSGIERYYQIARCFRDEDLRADRQPEFTQIDIEMSFMSQEDIMSLAEEMMAKVMRETKGEELQLPLPRMTYDEAMNKYGSDKPDTRFDMLLTDVSDIVKDTEFKVFSSAVANGGVVKAINVKGGAGDYSRKDIDALGAFAANYGAKGLAWVKVEADGVKGPIAKFFDEEKQSKLIEALDAAEGDLLLFGADQFEVVAASLGALRLKLGKERGLIDEKLFNFLWVIDWPLLEHDPEEGRFYAAHHPFTMPVREDLELIETAPEDMKAQAYDLVLNGYELGGGSIRIFEKDIQEKMFALLGFSPEEAAEQFGFLLEAFEYGAPPHGGIALGLDRLVMLLAGRTNLRDTIAFPKTASASCLMTEAPGEVSDAQLDELHLSIKKKVKN.

E177 contributes to the L-aspartate binding site. Residues 201-204 are aspartate; that stretch reads QLFK. R223 lines the L-aspartate pocket. Residues 223–225 and Q232 each bind ATP; that span reads RDE. L-aspartate is bound at residue H451. ATP is bound at residue E485. R492 provides a ligand contact to L-aspartate. 537-540 lines the ATP pocket; it reads GLDR.

The protein belongs to the class-II aminoacyl-tRNA synthetase family. Type 1 subfamily. Homodimer.

It localises to the cytoplasm. The enzyme catalyses tRNA(Asx) + L-aspartate + ATP = L-aspartyl-tRNA(Asx) + AMP + diphosphate. Its function is as follows. Aspartyl-tRNA synthetase with relaxed tRNA specificity since it is able to aspartylate not only its cognate tRNA(Asp) but also tRNA(Asn). Reaction proceeds in two steps: L-aspartate is first activated by ATP to form Asp-AMP and then transferred to the acceptor end of tRNA(Asp/Asn). This is Aspartate--tRNA(Asp/Asn) ligase from Bacillus subtilis (strain 168).